The following is a 228-amino-acid chain: MTVETQLNPTQPVNQQIYRILRRDIVHCLIAPGTPLSEKEVSVRFNVSRQPVREAFIKLAENGLIQIRPQRGSYVNKISMAQVRNGSFIRQAIECAVARRAASMITESQCYQLEQNLHQQRIAIERKQLDDFFELDDNFHQLLTQIADCQLAWDTIENLKATVDRVRYMSFDHVSPPEMLLRQHLDIFSALQKRDGDAVERAMTQHLQEISESVRQIRQENSDWFSEE.

The 68-residue stretch at 11–78 (QPVNQQIYRI…PQRGSYVNKI (68 aa)) folds into the HTH gntR-type domain. A DNA-binding region (H-T-H motif) is located at residues 38-57 (EKEVSVRFNVSRQPVREAFI).

Its function is as follows. Repressor of the rspAB operon. Acts by binding directly to the upstream region of rspA. This chain is HTH-type transcriptional repressor RspR (rspR), found in Escherichia coli (strain K12).